Here is a 431-residue protein sequence, read N- to C-terminus: tRNA-2-methylthio-N(6)-dimethylallyladenosine synthase (431 aa).

Positions 2–117 (KKLFIETLGC…ITEVVDKKHA (116 aa)) constitute an MTTase N-terminal domain. Positions 11, 48, 80, 149, 153, and 156 each coordinate [4Fe-4S] cluster. Residues 135–368 (RTNPFKAMVN…QTRHTEILDE (234 aa)) enclose the Radical SAM core domain. Residues 371-431 (DAQLGKVHEV…SRGALDGVLV (61 aa)) form the TRAM domain.

This sequence belongs to the methylthiotransferase family. MiaB subfamily. Monomer. Requires [4Fe-4S] cluster as cofactor.

Its subcellular location is the cytoplasm. The enzyme catalyses N(6)-dimethylallyladenosine(37) in tRNA + (sulfur carrier)-SH + AH2 + 2 S-adenosyl-L-methionine = 2-methylsulfanyl-N(6)-dimethylallyladenosine(37) in tRNA + (sulfur carrier)-H + 5'-deoxyadenosine + L-methionine + A + S-adenosyl-L-homocysteine + 2 H(+). In terms of biological role, catalyzes the methylthiolation of N6-(dimethylallyl)adenosine (i(6)A), leading to the formation of 2-methylthio-N6-(dimethylallyl)adenosine (ms(2)i(6)A) at position 37 in tRNAs that read codons beginning with uridine. In Sulfurovum sp. (strain NBC37-1), this protein is tRNA-2-methylthio-N(6)-dimethylallyladenosine synthase.